The sequence spans 399 residues: MASIDIAHERKTAATAGASARPHLAGLTRPLLMDALKAFGLPDNQLRMRAGQIWNGLYNRGFTDFERMTTLSKELRGKLADAFDISRLEIVTEQKSVDGTRKWLLRLPSGIPGVPGPEVETVYIPEEGRGTLCVSSQVGCTLTCTFCHTGTQKLVRNLTAGEIVGQILLARDALGEWPDGGRNSEDRLITNIVMMGMGEPLYNFENVRDALEVVSDGEGLSLSKRRITLSTSGVVPMIERAGEEIGCMLAISLHAVDDETRNRLVPLNKKYPIAELLEACRNYPGVSNARRITFEYVMLKGVNDSLEDAKALVRLLKHIPAKINLIPFNPWPGSPYECSDWEQIEKFADVVNRAGYASPVRTPRGRDIMAACGQLKSETVKARASERFKGEKAAAQPIA.

Glu120 serves as the catalytic Proton acceptor. The region spanning 126 to 367 (EEGRGTLCVS…SPVRTPRGRD (242 aa)) is the Radical SAM core domain. An intrachain disulfide couples Cys133 to Cys372. Residues Cys140, Cys144, and Cys147 each contribute to the [4Fe-4S] cluster site. S-adenosyl-L-methionine contacts are provided by residues 198-199 (GE), Ser230, 252-254 (SLH), and Asn329. Cys372 serves as the catalytic S-methylcysteine intermediate.

It belongs to the radical SAM superfamily. RlmN family. [4Fe-4S] cluster is required as a cofactor.

The protein localises to the cytoplasm. It catalyses the reaction adenosine(2503) in 23S rRNA + 2 reduced [2Fe-2S]-[ferredoxin] + 2 S-adenosyl-L-methionine = 2-methyladenosine(2503) in 23S rRNA + 5'-deoxyadenosine + L-methionine + 2 oxidized [2Fe-2S]-[ferredoxin] + S-adenosyl-L-homocysteine. It carries out the reaction adenosine(37) in tRNA + 2 reduced [2Fe-2S]-[ferredoxin] + 2 S-adenosyl-L-methionine = 2-methyladenosine(37) in tRNA + 5'-deoxyadenosine + L-methionine + 2 oxidized [2Fe-2S]-[ferredoxin] + S-adenosyl-L-homocysteine. Functionally, specifically methylates position 2 of adenine 2503 in 23S rRNA and position 2 of adenine 37 in tRNAs. m2A2503 modification seems to play a crucial role in the proofreading step occurring at the peptidyl transferase center and thus would serve to optimize ribosomal fidelity. The protein is Dual-specificity RNA methyltransferase RlmN of Parvibaculum lavamentivorans (strain DS-1 / DSM 13023 / NCIMB 13966).